A 1038-amino-acid polypeptide reads, in one-letter code: Dorsal-ventral patterning protein Sog (1038 aa).

At 1-53 the chain is on the cytoplasmic side; sequence MANKLRKSNAIEWATATGTVPLLERSCCHSEDAALEPQASKTSHREQAPILRH. The helical; Signal-anchor for type II membrane protein transmembrane segment at 54 to 74 threads the bilayer; sequence LSQLSHLLIIAGLLIVCLAGV. Over 75–1038 the chain is Extracellular; sequence TEGRRHAPLM…QPHHQQRSSS (964 aa). Positions 100–175 constitute a VWFC 1 domain; the sequence is TECQFGKVLR…LPGKCCKTCP (76 aa). Residues Asn-179 and Asn-287 are each glycosylated (N-linked (GlcNAc...) asparagine). CHRD domains follow at residues 197-337, 339-471, 474-588, and 592-713; these read NMKH…KYTA, QTEL…TRAS, IFQT…PRPV, and RDSA…STKV. N-linked (GlcNAc...) asparagine glycosylation is found at Asn-520, Asn-666, Asn-752, and Asn-821. One can recognise a VWFC 2 domain in the interval 742-804; sequence TKCFHSGRFY…RDGECCPSCV (63 aa). VWFC domains follow at residues 830-899 and 939-1020; these read RGCR…KICP and GGCK…TQCR.

This sequence belongs to the chordin family. Component of a complex composed of dpp, sog and tsg. Interacts with palmitoyltransferase Hip14. Palmitoylated, probably by Hip14. Post-translationally, cleaved by metalloproteases tok and tld. Cleavage by tok during pupal development contributes to specification of the posterior crossvein in the wing. In terms of tissue distribution, abuts the dorsal dpp-expressing cells in a lateral stripe 14-16 cells wide. Later in embryogenesis it is expressed in neuroectoderm and in the endoderm spaced along the anterior-posterior axis of the developing gut.

Its subcellular location is the golgi apparatus membrane. The protein resides in the cell membrane. The protein localises to the secreted. Its function is as follows. Putative negative growth factor. Antagonist of dpp, a protein involved in patterning the dorsal region and in the development of the neuroectoderm; dpp inhibition is enhanced by tsg. Required for establishment of a narrow stripe of peak levels of BMP signaling in the dorsal midline of early embryos, that will give rise to the amnioserosa. During pupal development, plays a role in specification of the posterior crossvein in the wing. Exhibits both agonist and antagonist activities towards BMP signaling during pupal wing patterning. In Drosophila melanogaster (Fruit fly), this protein is Dorsal-ventral patterning protein Sog (sog).